The following is a 248-amino-acid chain: NADP-dependent 3-hydroxy acid dehydrogenase YdfG (248 aa).

Residues G7–F12, R32–R33, D54–V55, and N81 contribute to the NADP(+) site. S134 serves as a coordination point for substrate. NADP(+) contacts are provided by residues Y147, K151, and P177–F185. Residue Y147 is the Proton acceptor of the active site.

Belongs to the short-chain dehydrogenases/reductases (SDR) family. As to quaternary structure, homotetramer.

It catalyses the reaction 3-hydroxypropanoate + NADP(+) = 3-oxopropanoate + NADPH + H(+). The enzyme catalyses L-allo-threonine + NADP(+) = aminoacetone + CO2 + NADPH. Functionally, NADP-dependent dehydrogenase with broad substrate specificity acting on 3-hydroxy acids. Catalyzes the NADP-dependent oxidation of L-allo-threonine to L-2-amino-3-keto-butyrate, which is spontaneously decarboxylated into aminoacetone. Also acts on D-threonine, L-serine, D-serine, D-3-hydroxyisobutyrate, L-3-hydroxyisobutyrate, D-glycerate and L-glycerate. Able to catalyze the reduction of the malonic semialdehyde to 3-hydroxypropionic acid. YdfG is apparently supplementing RutE, the presumed malonic semialdehyde reductase involved in pyrimidine degradation since both are able to detoxify malonic semialdehyde. The polypeptide is NADP-dependent 3-hydroxy acid dehydrogenase YdfG (Escherichia coli O157:H7).